The following is a 782-amino-acid chain: MDYSIATLLSYFVDDKLVAGKFLEKKLGCESPEAIEALQIALDALEKMGVLVKERGKYNRVTREDVVEARLRCSSKGFCFAIQDDEDATDIYVREGNLSNAWNGDRVLVKVIKDGTRRKSPEEQVHLILDRANPSLLAQVKKSEDNYRAVPLDDRLLFELELQDKEQNLGEAVDHLVHVSVLRYPIAQHPPLGEVTKVLGSDAEAAADTDIVSCKHDLPLGWTPEAIEALQSLPKVIEPGELKKRTWITAKLQLVTFGDGPRGETLPWQEVALSLESQANQWQVGIHITDIAHYIAEDSLLDQLARKRGTTVYLEEQICPLFPEGLIGRCSLIPDEDRLALSFFLTVDDRGEVTGFEYHSSVVKVDHQLDFSEVQTALADIESVSGELKPYGGLLQELFFQICPLIKSQRLQRGSFNLQTETASPRLDEGRLGVIMTQETLPIRSLLAELMVVLQREVALQLQALGIPGLYCGQVAPEGEDLTDIVKLAGNLDLGVKIDLEGDIIPQHYHHLSQGFESLPAKAVLNHLLANTLKIEKYFSHPAPHFALAYDSGYTHCVSPAQRYGDLVIQRLLKLVLTEGRDRRTKQMKTGVELNAHTCRNQISWNVLPPNLQETIEGDLHQLVLGLNDREQTAEDAEKDLLGLKKAEKMKARAGEIFRGLITGVQSYGFFVQIFDLLAEGLVHVSSLKDDWYEFRSRQCALVGRKSRTSYRLGNEVDVQVRSVDYYRQQIDLGAVNNAPKDSANMDFDDDDEDGDEREEQDTMDWDAMEDGDDDEGGAVIF.

One can recognise an RNB domain in the interval 270–579 (EVALSLESQA…QRLLKLVLTE (310 aa)). The S1 motif domain occupies 655–736 (GEIFRGLITG…YRQQIDLGAV (82 aa)). A disordered region spans residues 737–782 (NNAPKDSANMDFDDDDEDGDEREEQDTMDWDAMEDGDDDEGGAVIF). A compositionally biased stretch (acidic residues) spans 747–782 (DFDDDDEDGDEREEQDTMDWDAMEDGDDDEGGAVIF).

It belongs to the RNR ribonuclease family.

Functionally, not known; control resistance to the carbonic anhydrase inhibitor acetazolamide. In Synechocystis sp. (strain ATCC 27184 / PCC 6803 / Kazusa), this protein is Acetazolamide conferring resistance protein zam (zam).